The primary structure comprises 449 residues: Methylenetetrahydrofolate--tRNA-(uracil-5-)-methyltransferase TrmFO (449 aa).

10 to 15 (GGGLAG) lines the FAD pocket.

It belongs to the MnmG family. TrmFO subfamily. It depends on FAD as a cofactor.

Its subcellular location is the cytoplasm. It carries out the reaction uridine(54) in tRNA + (6R)-5,10-methylene-5,6,7,8-tetrahydrofolate + NADH + H(+) = 5-methyluridine(54) in tRNA + (6S)-5,6,7,8-tetrahydrofolate + NAD(+). The enzyme catalyses uridine(54) in tRNA + (6R)-5,10-methylene-5,6,7,8-tetrahydrofolate + NADPH + H(+) = 5-methyluridine(54) in tRNA + (6S)-5,6,7,8-tetrahydrofolate + NADP(+). Functionally, catalyzes the folate-dependent formation of 5-methyl-uridine at position 54 (M-5-U54) in all tRNAs. This is Methylenetetrahydrofolate--tRNA-(uracil-5-)-methyltransferase TrmFO from Sphingopyxis alaskensis (strain DSM 13593 / LMG 18877 / RB2256) (Sphingomonas alaskensis).